A 207-amino-acid chain; its full sequence is Ribosome maturation factor RimM (207 aa).

A PRC barrel domain is found at 114–207 (DDEYYWVDLI…RIDSDWPLDY (94 aa)).

It belongs to the RimM family. As to quaternary structure, binds ribosomal protein uS19.

It localises to the cytoplasm. Its function is as follows. An accessory protein needed during the final step in the assembly of 30S ribosomal subunit, possibly for assembly of the head region. Essential for efficient processing of 16S rRNA. May be needed both before and after RbfA during the maturation of 16S rRNA. It has affinity for free ribosomal 30S subunits but not for 70S ribosomes. The protein is Ribosome maturation factor RimM of Bordetella pertussis (strain Tohama I / ATCC BAA-589 / NCTC 13251).